The chain runs to 328 residues: GMP reductase (328 aa).

Catalysis depends on C176, which acts as the Thioimidate intermediate. 205–228 is a binding site for NADP(+); the sequence is IIADGGIRTHGDIAKSVRFGATMV.

The protein belongs to the IMPDH/GMPR family. GuaC type 2 subfamily.

The enzyme catalyses IMP + NH4(+) + NADP(+) = GMP + NADPH + 2 H(+). Functionally, catalyzes the irreversible NADPH-dependent deamination of GMP to IMP. It functions in the conversion of nucleobase, nucleoside and nucleotide derivatives of G to A nucleotides, and in maintaining the intracellular balance of A and G nucleotides. The sequence is that of GMP reductase from Shouchella clausii (strain KSM-K16) (Alkalihalobacillus clausii).